Reading from the N-terminus, the 131-residue chain is Small ribosomal subunit protein eS24 (131 aa).

N-acetylmethionine is present on M1. T9 bears the Phosphothreonine mark. A Glycyl lysine isopeptide (Lys-Gly) (interchain with G-Cter in SUMO2) cross-link involves residue K37. Over residues 90–100 (RLARHGLYEKK) the composition is skewed to basic and acidic residues. The segment at 90-131 (RLARHGLYEKKKTSRKQRKERKNRMKKVRGTAKANVGAGKKK) is disordered. Residues 101-119 (KTSRKQRKERKNRMKKVRG) show a composition bias toward basic residues.

It belongs to the eukaryotic ribosomal protein eS24 family. As to quaternary structure, component of the small ribosomal subunit. Part of the small subunit (SSU) processome, composed of more than 70 proteins and the RNA chaperone small nucleolar RNA (snoRNA) U3.

It localises to the cytoplasm. The protein localises to the nucleus. It is found in the nucleolus. In terms of biological role, component of the small ribosomal subunit. The ribosome is a large ribonucleoprotein complex responsible for the synthesis of proteins in the cell. Required for processing of pre-rRNA and maturation of 40S ribosomal subunits. Part of the small subunit (SSU) processome, first precursor of the small eukaryotic ribosomal subunit. During the assembly of the SSU processome in the nucleolus, many ribosome biogenesis factors, an RNA chaperone and ribosomal proteins associate with the nascent pre-rRNA and work in concert to generate RNA folding, modifications, rearrangements and cleavage as well as targeted degradation of pre-ribosomal RNA by the RNA exosome. The polypeptide is Small ribosomal subunit protein eS24 (RPS24) (Macaca fascicularis (Crab-eating macaque)).